The primary structure comprises 268 residues: N-formylmaleamate deformylase (268 aa).

The 224-residue stretch at 28–251 (ALILVPGITS…NAGHMIPWDD (224 aa)) folds into the AB hydrolase-1 domain. Active-site charge relay system residues include Ser101, Glu221, and His245.

It carries out the reaction N-formylmaleamate + H2O = maleamate + formate + H(+). Its pathway is cofactor degradation; nicotinate degradation. Functionally, deformylase that catalyzes the conversion of N-formylmaleamic acid to maleamate in the aerobic nicotinate degradation pathway. The polypeptide is N-formylmaleamate deformylase (nicD) (Pseudomonas putida (strain ATCC 47054 / DSM 6125 / CFBP 8728 / NCIMB 11950 / KT2440)).